A 544-amino-acid polypeptide reads, in one-letter code: Probable protein kinase UbiB (544 aa).

Residues 123–501 (EFDIKPLASA…KRQQATGKFL (379 aa)) form the Protein kinase domain. ATP-binding positions include 129–137 (LASASIAQV) and Lys-152. Catalysis depends on Asp-287, which acts as the Proton acceptor. The next 2 membrane-spanning stretches (helical) occupy residues 496–516 (ATGK…AILV) and 519–539 (AYEQ…LLSW).

Belongs to the ABC1 family. UbiB subfamily.

It is found in the cell inner membrane. Its pathway is cofactor biosynthesis; ubiquinone biosynthesis [regulation]. Its function is as follows. Is probably a protein kinase regulator of UbiI activity which is involved in aerobic coenzyme Q (ubiquinone) biosynthesis. The chain is Probable protein kinase UbiB from Vibrio campbellii (strain ATCC BAA-1116).